The following is a 507-amino-acid chain: Phosphoprotein (507 aa).

2 positions are modified to phosphoserine: serine 86 and serine 151. Acidic residues predominate over residues 137 to 160; that stretch reads DGVEVWGGDEESENSDVDSGEPDP. The disordered stretch occupies residues 137 to 307; sequence DGVEVWGGDE…QSNIEPEDDY (171 aa). Composition is skewed to basic and acidic residues over residues 189-199 and 222-233; these read EIQKLLEDQSR and TASEKPIKKGTD. Composition is skewed to low complexity over residues 236 to 252 and 266 to 278; these read STSSGTMAESSSTGGAT and NASAENALASASN. Over residues 279–301 the composition is skewed to polar residues; it reads VSPTQGSKTESGTTTSRISQSNI. Positions 304–376 are multimerization; it reads EDDYDDELFS…LSSVMIAIPG (73 aa). The interaction with the nucleocapsid (N-RNA) stretch occupies residues 459–507; that stretch reads ASRSVIRSIIKSSHLGEDRKDYLMSLLNDIQGSKDLAQFHQMLVKILKN.

This sequence belongs to the morbillivirus P protein family. In terms of assembly, homotetramer. Interacts (via multimerization domain) with polymerase L; this interaction forms the polymerase L-P complex. Interacts (via N-terminus) with N0 (via Ncore); this interaction allows P to chaperon N0 to avoid N polymerization before encapsidation. Interacts (via C-terminus) with N-RNA template; this interaction positions the polymerase on the template for both transcription and replication. In terms of processing, phosphorylation on serines by host CK2 is necessary for the formation of viral factories.

Its function is as follows. Essential cofactor of the RNA polymerase L that plays a central role in the transcription and replication by forming the polymerase complex with RNA polymerase L and recruiting L to the genomic N-RNA template for RNA synthesis. Also plays a central role in the encapsidation of nascent RNA chains by forming the encapsidation complex with the nucleocapsid protein N (N-P complex). Acts as a chaperone for newly synthesized free N protein, so-called N0, allowing encapsidation of nascent RNA chains during replication. The nucleoprotein protein N prevents excessive phosphorylation of P, which leads to down-regulation of viral transcription/ replication. Participates, together with N, in the formation of viral factories (viroplasms), which are large inclusions in the host cytoplasm where replication takes place. The sequence is that of Phosphoprotein (P/V) from Bos indicus (Zebu).